The sequence spans 357 residues: RNA 3'-terminal phosphate cyclase (357 aa).

ATP contacts are provided by residues Q102 and 293–296; that span reads HMGD. The active-site Tele-AMP-histidine intermediate is the H319.

The protein belongs to the RNA 3'-terminal cyclase family. Type 1 subfamily.

It localises to the cytoplasm. The catalysed reaction is a 3'-end 3'-phospho-ribonucleotide-RNA + ATP = a 3'-end 2',3'-cyclophospho-ribonucleotide-RNA + AMP + diphosphate. In terms of biological role, catalyzes the conversion of 3'-phosphate to a 2',3'-cyclic phosphodiester at the end of RNA. The mechanism of action of the enzyme occurs in 3 steps: (A) adenylation of the enzyme by ATP; (B) transfer of adenylate to an RNA-N3'P to produce RNA-N3'PP5'A; (C) and attack of the adjacent 2'-hydroxyl on the 3'-phosphorus in the diester linkage to produce the cyclic end product. The biological role of this enzyme is unknown but it is likely to function in some aspects of cellular RNA processing. The chain is RNA 3'-terminal phosphate cyclase from Staphylothermus marinus (strain ATCC 43588 / DSM 3639 / JCM 9404 / F1).